The sequence spans 215 residues: Probable phosphoglycerate mutase GpmB (215 aa).

Substrate contacts are provided by residues arginine 8–asparagine 15, glutamine 21–glycine 22, arginine 58, glutamate 82–methionine 85, and glycine 151–methionine 152. The active-site Tele-phosphohistidine intermediate is the histidine 9. Catalysis depends on glutamate 82, which acts as the Proton donor/acceptor.

The protein belongs to the phosphoglycerate mutase family. GpmB subfamily.

It catalyses the reaction (2R)-2-phosphoglycerate = (2R)-3-phosphoglycerate. Its pathway is carbohydrate degradation; glycolysis; pyruvate from D-glyceraldehyde 3-phosphate: step 3/5. The polypeptide is Probable phosphoglycerate mutase GpmB (Yersinia pseudotuberculosis serotype O:1b (strain IP 31758)).